Here is a 278-residue protein sequence, read N- to C-terminus: HTH-type transcriptional activator RhaS (278 aa).

The 99-residue stretch at asparagine 174 to glycine 272 folds into the HTH araC/xylS-type domain. 2 DNA-binding regions (H-T-H motif) span residues glutamate 191 to threonine 212 and valine 239 to phenylalanine 262.

In terms of assembly, binds DNA as a dimer.

The protein localises to the cytoplasm. Activates expression of the rhaBAD and rhaT operons. This Salmonella arizonae (strain ATCC BAA-731 / CDC346-86 / RSK2980) protein is HTH-type transcriptional activator RhaS.